The primary structure comprises 137 residues: Putative pre-16S rRNA nuclease (137 aa).

The protein belongs to the YqgF nuclease family.

It is found in the cytoplasm. Functionally, could be a nuclease involved in processing of the 5'-end of pre-16S rRNA. The protein is Putative pre-16S rRNA nuclease of Actinobacillus pleuropneumoniae serotype 5b (strain L20).